The primary structure comprises 453 residues: Argininosuccinate lyase (453 aa).

The protein belongs to the lyase 1 family. Argininosuccinate lyase subfamily.

The protein resides in the cytoplasm. The catalysed reaction is 2-(N(omega)-L-arginino)succinate = fumarate + L-arginine. The protein operates within amino-acid biosynthesis; L-arginine biosynthesis; L-arginine from L-ornithine and carbamoyl phosphate: step 3/3. The sequence is that of Argininosuccinate lyase from Shewanella loihica (strain ATCC BAA-1088 / PV-4).